A 96-amino-acid polypeptide reads, in one-letter code: Large ribosomal subunit protein eL21 (96 aa).

Belongs to the eukaryotic ribosomal protein eL21 family.

The protein is Large ribosomal subunit protein eL21 of Methanosphaerula palustris (strain ATCC BAA-1556 / DSM 19958 / E1-9c).